We begin with the raw amino-acid sequence, 186 residues long: Golgi apparatus membrane protein-like protein ECHIDNA (186 aa).

Residue Met1 is modified to N-acetylmethionine. Helical transmembrane passes span 35-55 (ILSALFFNSFVIIFVVTVLLA), 108-128 (FWWTLYLAAAAWFILGVFSLI), and 132-152 (ADYLLVVGVCLSLNVANIIGF).

It belongs to the TVP23 family. As to quaternary structure, component of a trans-Golgi network (TGN)-localized ECH/YIP4 complex made of ECH, YIP4A and YIP4B. Interacts directly with YIP4A and YIP4B.

It localises to the golgi apparatus. The protein localises to the trans-Golgi network membrane. Its subcellular location is the early endosome membrane. Its function is as follows. Mediates trans-Golgi-network trafficking and cell elongation. Required for keeping the appropriate balance between secretory trafficking and vacuolar targeting of a subset of proteins. The ECH/YIP4 complex is involved in the modulation of the trans-Golgi network (TGN)-mediated trafficking of some proteins and cell wall components (e.g. pectin and hemicellulose) to the cell wall in dark-grown hypocotyls and in secretory cells of the seed coat. The chain is Golgi apparatus membrane protein-like protein ECHIDNA from Arabidopsis thaliana (Mouse-ear cress).